Reading from the N-terminus, the 234-residue chain is Carboxy-S-adenosyl-L-methionine synthase (234 aa).

S-adenosyl-L-methionine contacts are provided by residues Tyr-35, 60–62 (GCS), 109–110 (DV), Asn-124, and Arg-191.

The protein belongs to the class I-like SAM-binding methyltransferase superfamily. Cx-SAM synthase family. Homodimer.

It catalyses the reaction prephenate + S-adenosyl-L-methionine = carboxy-S-adenosyl-L-methionine + 3-phenylpyruvate + H2O. Its function is as follows. Catalyzes the conversion of S-adenosyl-L-methionine (SAM) to carboxy-S-adenosyl-L-methionine (Cx-SAM). This Campylobacter curvus (strain 525.92) protein is Carboxy-S-adenosyl-L-methionine synthase.